The following is a 497-amino-acid chain: Probable malate:quinone oxidoreductase (497 aa).

The protein belongs to the MQO family. The cofactor is FAD.

The catalysed reaction is (S)-malate + a quinone = a quinol + oxaloacetate. It functions in the pathway carbohydrate metabolism; tricarboxylic acid cycle; oxaloacetate from (S)-malate (quinone route): step 1/1. This is Probable malate:quinone oxidoreductase from Prochlorococcus marinus (strain MIT 9515).